The chain runs to 326 residues: Polycomb complex protein BMI-1 (326 aa).

The RING-type zinc-finger motif lies at 18–57 (CVLCGGYFIDATTIIECLHSFCKTCIVRYLETSKYCPICD). The short motif at 81–95 (KLVPGLFKNEMKRRR) is the Nuclear localization signal element. The interval 162 to 182 (RYLRCPAAMTVMHLRKFLRSK) is interaction with PHC2. The segment at 164-228 (LRCPAAMTVM…GPLPLKYRVR (65 aa)) is interaction with E4F1. Residues 236 to 326 (ISHQRDGLTN…VNGSSATSSG (91 aa)) are disordered. Low complexity-rich tracts occupy residues 266 to 278 (PSTS…PSTP), 290 to 303 (SSTM…PSGN), and 315 to 326 (SSVNGSSATSSG).

In terms of assembly, component of a PRC1-like complex. Identified in a PRC1-like HPRC-H complex with CBX2, CBX4, CBX8, PHC1, PHC2, PHC3 RING1 and RNF2. Interacts with RNF2/RING2. Interacts with RING1. Part of a complex that contains RNF2, UB2D3 and BMI1, where RNF2 and BMI1 form a tight heterodimer, and UB2D3 interacts only with RNF2. The complex composed of RNF2, UB2D3 and BMI1 binds nucleosomes, and has activity only with nucleosomal histone H2A. Interacts with CBX7 and CBX8. Interacts with SPOP. Part of a complex consisting of BMI1, CUL3 and SPOP. Interacts with E4F1. Interacts with PHC2. Interacts with zinc finger protein ZNF277. May be part of a complex including at least ZNF277, BMI1 and RNF2/RING2. May be polyubiquitinated; which does not lead to proteasomal degradation. Monoubiquitinated.

Its subcellular location is the nucleus. It is found in the cytoplasm. In terms of biological role, component of a Polycomb group (PcG) multiprotein PRC1-like complex, a complex class required to maintain the transcriptionally repressive state of many genes, including Hox genes, throughout development. PcG PRC1 complex acts via chromatin remodeling and modification of histones; it mediates monoubiquitination of histone H2A 'Lys-119', rendering chromatin heritably changed in its expressibility. The complex composed of RNF2, UB2D3 and BMI1 binds nucleosomes, and has activity only with nucleosomal histone H2A. In the PRC1-like complex, regulates the E3 ubiquitin-protein ligase activity of RNF2/RING2. This Bos taurus (Bovine) protein is Polycomb complex protein BMI-1 (BMI1).